The sequence spans 292 residues: Transcription factor-like protein DPA (292 aa).

The segment at 1 to 25 (MSMEMELFVTPEKQRQHPSVSVEKT) is disordered. A DNA-binding region spans residues 51–135 (GGGLRQFSVM…KKEIRWKGLP (85 aa)). The short motif at 101–135 (NEKNIRRRVYDALNVFMALDIIARDKKEIRWKGLP) is the DEF box element. Positions 163 to 184 (LKELREKVSSLESLMSRNQEMV) form a coiled coil. The interval 246 to 280 (QEQNRVSSSSSTHHQSQHSSAHSSSSSCIASGTSG) is disordered. Positions 252-280 (SSSSSTHHQSQHSSAHSSSSSCIASGTSG) are enriched in low complexity.

Belongs to the E2F/DP family. Heterodimer with E2F. Interacts preferentially with E2FA and E2FB, but also with E2FC. In terms of tissue distribution, strongly expressed in the actively dividing tissues of the shoot apical meristem, young leaf primordia, the vascular tissues of the maturing leaf primordia and axillary buds.

The protein localises to the cytoplasm. Its subcellular location is the nucleus. In terms of biological role, involved in the regulation of the G1/S transition. Increases the DNA binding and the transactivation activities of E2F proteins after heterodimerization. The complex DPA/E2FA promotes cell division and acts as a regulator of the endocycle. Positively regulates the activity of S phase-specific genes. The chain is Transcription factor-like protein DPA (DPA) from Arabidopsis thaliana (Mouse-ear cress).